A 323-amino-acid chain; its full sequence is Solute carrier family 35 member B1 (323 aa).

Helical transmembrane passes span leucine 15 to isoleucine 35, phenylalanine 51 to isoleucine 71, tryptophan 85 to leucine 105, tyrosine 136 to tyrosine 156, threonine 169 to valine 189, methionine 205 to glycine 225, leucine 253 to isoleucine 273, and valine 286 to leucine 306. Positions lysine 319–histidine 323 match the Di-lysine motif motif.

This sequence belongs to the nucleotide-sugar transporter family. SLC35B subfamily.

It is found in the endoplasmic reticulum membrane. Functionally, probable sugar transporter. In Xenopus tropicalis (Western clawed frog), this protein is Solute carrier family 35 member B1 (slc35b1).